The sequence spans 572 residues: Urease subunit alpha (572 aa).

One can recognise a Urease domain in the interval G131–F572. Ni(2+)-binding residues include H136, H138, and K219. K219 is subject to N6-carboxylysine. H221 contributes to the substrate binding site. H248 and H274 together coordinate Ni(2+). H322 (proton donor) is an active-site residue. Ni(2+) is bound at residue D362.

It belongs to the metallo-dependent hydrolases superfamily. Urease alpha subunit family. In terms of assembly, heterotrimer of UreA (gamma), UreB (beta) and UreC (alpha) subunits. Three heterotrimers associate to form the active enzyme. Ni cation is required as a cofactor. Post-translationally, carboxylation allows a single lysine to coordinate two nickel ions.

Its subcellular location is the cytoplasm. The enzyme catalyses urea + 2 H2O + H(+) = hydrogencarbonate + 2 NH4(+). Its pathway is nitrogen metabolism; urea degradation; CO(2) and NH(3) from urea (urease route): step 1/1. This Thermosynechococcus vestitus (strain NIES-2133 / IAM M-273 / BP-1) protein is Urease subunit alpha.